A 195-amino-acid polypeptide reads, in one-letter code: Ras-related protein rac-2 (195 aa).

Residue 10–17 (GDGAVGKT) coordinates GTP. Residues 32–40 (YILTVFDTY) carry the Effector region motif. Residues 57-61 (DTAGQ) and 115-118 (TKAD) contribute to the GTP site. A disordered region spans residues 176 to 195 (GLTPPQTPQTRAKKSNCTVL). Cysteine 192 carries the cysteine methyl ester modification. Cysteine 192 carries S-geranylgeranyl cysteine lipidation. A propeptide spans 193–195 (TVL) (removed in mature form).

It belongs to the small GTPase superfamily. Rho family.

It is found in the cell membrane. Its function is as follows. During gonad morphogenesis, plays a role in distal tip cell (DTC)-mediated guidance of gonad elongation. This chain is Ras-related protein rac-2 (rac-2), found in Caenorhabditis elegans.